Reading from the N-terminus, the 790-residue chain is PAN2-PAN3 deadenylation complex subunit PAN3 (790 aa).

2 disordered regions span residues 166 to 191 (IAQQ…AVSA) and 235 to 259 (AMIS…ASPI). The segment covering 168-191 (QQQPQHPQKQQQHPPSVGGGAVSA) has biased composition (low complexity). The tract at residues 369–655 (DAAEAAQHAL…SVTDLMPMIG (287 aa)) is pseudokinase domain. Residues R423, 472–479 (DYHPGSQT), and 552–553 (TK) each bind ATP. A coiled-coil region spans residues 656-694 (ARFYTQLDALQSKIDMQEDELAKEMENGRLYRILVKLNS). The tract at residues 695–790 (INERPDFNLD…FSELMSSAAN (96 aa)) is knob domain.

This sequence belongs to the protein kinase superfamily. PAN3 family. As to quaternary structure, homodimer. Forms a heterotrimer with a catalytic subunit PAN2 to form the poly(A)-nuclease (PAN) deadenylation complex. Interacts (via PAM-2 motif) with poly(A)-binding protein (via PABC domain), conferring substrate specificity of the enzyme complex. Interacts with the GW182 family protein gw. Interacts with Gyf.

Its subcellular location is the cytoplasm. The protein localises to the P-body. Its function is as follows. Regulatory subunit of the poly(A)-nuclease (PAN) deadenylation complex, one of two cytoplasmic mRNA deadenylases involved in general and miRNA-mediated mRNA turnover. PAN specifically shortens poly(A) tails of RNA and the activity is stimulated by poly(A)-binding protein (PABP). PAN deadenylation is followed by rapid degradation of the shortened mRNA tails by the CCR4-NOT complex. Deadenylated mRNAs are then degraded by two alternative mechanisms, namely exosome-mediated 3'-5' exonucleolytic degradation, or deadenylation-dependent mRNA decaping and subsequent 5'-3' exonucleolytic degradation by XRN1. PAN3 acts as a positive regulator for PAN activity, recruiting the catalytic subunit PAN2 to mRNA via its interaction with RNA and PABP, and to miRNA targets via its interaction with GW182 family proteins. The protein is PAN2-PAN3 deadenylation complex subunit PAN3 of Drosophila melanogaster (Fruit fly).